Reading from the N-terminus, the 593-residue chain is Aspartate--tRNA ligase (593 aa).

Residue E173 participates in L-aspartate binding. Residues Q197–K200 form an aspartate region. Position 219 (R219) interacts with L-aspartate. Residues R219–E221 and Q228 contribute to the ATP site. H449 is an L-aspartate binding site. An ATP-binding site is contributed by E483. L-aspartate is bound at residue R490. Residue G535–R538 coordinates ATP.

It belongs to the class-II aminoacyl-tRNA synthetase family. Type 1 subfamily. In terms of assembly, homodimer.

It localises to the cytoplasm. The catalysed reaction is tRNA(Asp) + L-aspartate + ATP = L-aspartyl-tRNA(Asp) + AMP + diphosphate. Its function is as follows. Catalyzes the attachment of L-aspartate to tRNA(Asp) in a two-step reaction: L-aspartate is first activated by ATP to form Asp-AMP and then transferred to the acceptor end of tRNA(Asp). This Shewanella piezotolerans (strain WP3 / JCM 13877) protein is Aspartate--tRNA ligase.